A 562-amino-acid polypeptide reads, in one-letter code: UPF0649 protein C1442.02 (562 aa).

Phosphoserine occurs at positions 285 and 286. The tract at residues 288-308 is disordered; it reads DEEIAKNADVPAEVDNNSTKA.

The protein belongs to the UPF0649 family.

It localises to the cytoplasm. Its subcellular location is the nucleus. The protein is UPF0649 protein C1442.02 of Schizosaccharomyces pombe (strain 972 / ATCC 24843) (Fission yeast).